A 434-amino-acid chain; its full sequence is 3-isopropylmalate dehydratase large subunit 1 (434 aa).

3 residues coordinate [4Fe-4S] cluster: Cys-308, Cys-368, and Cys-371.

It belongs to the aconitase/IPM isomerase family. LeuC type 2 subfamily. In terms of assembly, heterodimer of LeuC and LeuD. The cofactor is [4Fe-4S] cluster.

The catalysed reaction is (2R,3S)-3-isopropylmalate = (2S)-2-isopropylmalate. Its pathway is amino-acid biosynthesis; L-leucine biosynthesis; L-leucine from 3-methyl-2-oxobutanoate: step 2/4. Its function is as follows. Catalyzes the isomerization between 2-isopropylmalate and 3-isopropylmalate, via the formation of 2-isopropylmaleate. This chain is 3-isopropylmalate dehydratase large subunit 1, found in Deinococcus radiodurans (strain ATCC 13939 / DSM 20539 / JCM 16871 / CCUG 27074 / LMG 4051 / NBRC 15346 / NCIMB 9279 / VKM B-1422 / R1).